Consider the following 212-residue polypeptide: Nucleoside triphosphate pyrophosphatase (212 aa).

Asp79 serves as the catalytic Proton acceptor.

It belongs to the Maf family. The cofactor is a divalent metal cation.

The protein localises to the cytoplasm. The enzyme catalyses a ribonucleoside 5'-triphosphate + H2O = a ribonucleoside 5'-phosphate + diphosphate + H(+). It carries out the reaction a 2'-deoxyribonucleoside 5'-triphosphate + H2O = a 2'-deoxyribonucleoside 5'-phosphate + diphosphate + H(+). Nucleoside triphosphate pyrophosphatase. May have a dual role in cell division arrest and in preventing the incorporation of modified nucleotides into cellular nucleic acids. This chain is Nucleoside triphosphate pyrophosphatase, found in Nocardia farcinica (strain IFM 10152).